The chain runs to 254 residues: Glucosamine-6-phosphate deaminase (254 aa).

Catalysis depends on Asp67, which acts as the Proton acceptor; for enolization step. Asn136 (for ring-opening step) is an active-site residue. Residue His138 is the Proton acceptor; for ring-opening step of the active site. The active-site For ring-opening step is the Glu143.

Belongs to the glucosamine/galactosamine-6-phosphate isomerase family. NagB subfamily.

It carries out the reaction alpha-D-glucosamine 6-phosphate + H2O = beta-D-fructose 6-phosphate + NH4(+). The protein operates within amino-sugar metabolism; N-acetylneuraminate degradation; D-fructose 6-phosphate from N-acetylneuraminate: step 5/5. In terms of biological role, catalyzes the reversible isomerization-deamination of glucosamine 6-phosphate (GlcN6P) to form fructose 6-phosphate (Fru6P) and ammonium ion. In Brevibacillus brevis (strain 47 / JCM 6285 / NBRC 100599), this protein is Glucosamine-6-phosphate deaminase.